Consider the following 234-residue polypeptide: Uridylate kinase (234 aa).

Residues 8–11 (KLSG), Gly-51, and Arg-55 contribute to the ATP site. Residues Asp-68 and 129-136 (TSNPFFTT) contribute to the UMP site. ATP-binding residues include Thr-156, Tyr-162, and Asp-165.

It belongs to the UMP kinase family. In terms of assembly, homohexamer.

It localises to the cytoplasm. The enzyme catalyses UMP + ATP = UDP + ADP. It functions in the pathway pyrimidine metabolism; CTP biosynthesis via de novo pathway; UDP from UMP (UMPK route): step 1/1. With respect to regulation, inhibited by UTP. In terms of biological role, catalyzes the reversible phosphorylation of UMP to UDP. The sequence is that of Uridylate kinase from Fervidobacterium nodosum (strain ATCC 35602 / DSM 5306 / Rt17-B1).